We begin with the raw amino-acid sequence, 160 residues long: Lymphocyte antigen 96 (160 aa).

An N-terminal signal peptide occupies residues 1 to 16 (MLPFILFSTLLPLIFT). 3 disulfide bridges follow: Cys-25-Cys-51, Cys-37-Cys-148, and Cys-95-Cys-105. N-linked (GlcNAc...) asparagine glycosylation is found at Asn-26, Asn-77, and Asn-101. The interaction with lipopolysaccharide stretch occupies residues 119-123 (FSFKG). A glycan (N-linked (GlcNAc...) asparagine) is linked at Asn-150.

Heterogeneous homomer formed from homodimers; disulfide-linked. Belongs to the lipopolysaccharide (LPS) receptor, a multi-protein complex containing at least CD14, LY96 and TLR4. Binds to the extracellular domains of TLR2 and TLR4. Ligand binding induces interaction with TLR4 and oligomerization of the complex. In terms of processing, N-glycosylated.

The protein localises to the secreted. It localises to the extracellular space. Binds bacterial lipopolysaccharide (LPS). Cooperates with TLR4 in the innate immune response to bacterial lipopolysaccharide (LPS), and with TLR2 in the response to cell wall components from Gram-positive and Gram-negative bacteria. Enhances TLR4-dependent activation of NF-kappa-B. Cells expressing both LY96 and TLR4, but not TLR4 alone, respond to LPS. The chain is Lymphocyte antigen 96 (LY96) from Cricetulus griseus (Chinese hamster).